Consider the following 212-residue polypeptide: Peptide methionine sulfoxide reductase MsrA (212 aa).

Cys52 is a catalytic residue.

This sequence belongs to the MsrA Met sulfoxide reductase family.

It carries out the reaction L-methionyl-[protein] + [thioredoxin]-disulfide + H2O = L-methionyl-(S)-S-oxide-[protein] + [thioredoxin]-dithiol. The enzyme catalyses [thioredoxin]-disulfide + L-methionine + H2O = L-methionine (S)-S-oxide + [thioredoxin]-dithiol. Functionally, has an important function as a repair enzyme for proteins that have been inactivated by oxidation. Catalyzes the reversible oxidation-reduction of methionine sulfoxide in proteins to methionine. This is Peptide methionine sulfoxide reductase MsrA from Salmonella schwarzengrund (strain CVM19633).